The chain runs to 362 residues: Cobalt-precorrin-5B C(1)-methyltransferase (362 aa).

This sequence belongs to the CbiD family.

It catalyses the reaction Co-precorrin-5B + S-adenosyl-L-methionine = Co-precorrin-6A + S-adenosyl-L-homocysteine. Its pathway is cofactor biosynthesis; adenosylcobalamin biosynthesis; cob(II)yrinate a,c-diamide from sirohydrochlorin (anaerobic route): step 6/10. Catalyzes the methylation of C-1 in cobalt-precorrin-5B to form cobalt-precorrin-6A. The polypeptide is Cobalt-precorrin-5B C(1)-methyltransferase (Geobacter sulfurreducens (strain ATCC 51573 / DSM 12127 / PCA)).